The following is a 754-amino-acid chain: Probable galactinol--sucrose galactosyltransferase 1 (754 aa).

It belongs to the glycosyl hydrolases 36 family.

It carries out the reaction alpha-D-galactosyl-(1-&gt;3)-1D-myo-inositol + sucrose = raffinose + myo-inositol. Transglycosidase operating by a ping-pong reaction mechanism. Involved in the synthesis of raffinose, a major soluble carbohydrate in seeds, roots and tubers. The protein is Probable galactinol--sucrose galactosyltransferase 1 (RFS1) of Arabidopsis thaliana (Mouse-ear cress).